The sequence spans 116 residues: Ribonuclease P protein component (116 aa).

It belongs to the RnpA family. As to quaternary structure, consists of a catalytic RNA component (M1 or rnpB) and a protein subunit.

The catalysed reaction is Endonucleolytic cleavage of RNA, removing 5'-extranucleotides from tRNA precursor.. In terms of biological role, RNaseP catalyzes the removal of the 5'-leader sequence from pre-tRNA to produce the mature 5'-terminus. It can also cleave other RNA substrates such as 4.5S RNA. The protein component plays an auxiliary but essential role in vivo by binding to the 5'-leader sequence and broadening the substrate specificity of the ribozyme. The sequence is that of Ribonuclease P protein component from Gluconacetobacter diazotrophicus (strain ATCC 49037 / DSM 5601 / CCUG 37298 / CIP 103539 / LMG 7603 / PAl5).